The sequence spans 482 residues: Hydroxymethylglutaryl-CoA synthase A (482 aa).

Glutamate 85 serves as the catalytic Proton donor/acceptor. Cysteine 119 acts as the Acyl-thioester intermediate in catalysis. Positions 119, 161, 211, 249, 258, 325, and 358 each coordinate (3S)-3-hydroxy-3-methylglutaryl-CoA. The active-site Proton donor/acceptor is the histidine 249.

This sequence belongs to the thiolase-like superfamily. HMG-CoA synthase family.

It carries out the reaction acetoacetyl-CoA + acetyl-CoA + H2O = (3S)-3-hydroxy-3-methylglutaryl-CoA + CoA + H(+). It participates in metabolic intermediate biosynthesis; (R)-mevalonate biosynthesis; (R)-mevalonate from acetyl-CoA: step 2/3. In terms of biological role, condenses acetyl-CoA with acetoacetyl-CoA to form HMG-CoA, which is the substrate for HMG-CoA reductase. This Dictyostelium discoideum (Social amoeba) protein is Hydroxymethylglutaryl-CoA synthase A (hgsA).